Consider the following 245-residue polypeptide: Probable phosphatase YcdX (245 aa).

Zn(2+) contacts are provided by His-7, His-9, His-15, His-40, Glu-73, His-101, His-131, Asp-192, and His-194.

This sequence belongs to the PHP family. In terms of assembly, homotrimer. Zn(2+) serves as cofactor.

The sequence is that of Probable phosphatase YcdX from Salmonella heidelberg (strain SL476).